Consider the following 37-residue polypeptide: Large ribosomal subunit protein bL36 (37 aa).

Belongs to the bacterial ribosomal protein bL36 family.

The chain is Large ribosomal subunit protein bL36 from Marinomonas sp. (strain MWYL1).